A 78-amino-acid polypeptide reads, in one-letter code: Large ribosomal subunit protein bL28 (78 aa).

Belongs to the bacterial ribosomal protein bL28 family.

This Pasteurella multocida (strain Pm70) protein is Large ribosomal subunit protein bL28.